The following is a 152-amino-acid chain: Acidic phospholipase A2 S17-58 (152 aa).

Residues 1–19 (MYPAHLLVLLAVCVSLLGA) form the signal peptide. Positions 20–27 (SNIPLPSL) are excised as a propeptide. 7 disulfide bridges follow: cysteine 38–cysteine 104, cysteine 54–cysteine 151, cysteine 56–cysteine 72, cysteine 71–cysteine 132, cysteine 78–cysteine 125, cysteine 88–cysteine 118, and cysteine 111–cysteine 123. Residues tyrosine 55, glycine 57, and glycine 59 each contribute to the Ca(2+) site. Histidine 75 is an active-site residue. Aspartate 76 serves as a coordination point for Ca(2+). Aspartate 126 is an active-site residue.

The protein belongs to the phospholipase A2 family. Group I subfamily. D49 sub-subfamily. It depends on Ca(2+) as a cofactor. In terms of tissue distribution, expressed by the venom gland.

The protein resides in the secreted. It catalyses the reaction a 1,2-diacyl-sn-glycero-3-phosphocholine + H2O = a 1-acyl-sn-glycero-3-phosphocholine + a fatty acid + H(+). Its function is as follows. Snake venom phospholipase A2 (PLA2) that inhibits collagen-induced platelet aggregation. PLA2 catalyzes the calcium-dependent hydrolysis of the 2-acyl groups in 3-sn-phosphoglycerides. This chain is Acidic phospholipase A2 S17-58, found in Austrelaps superbus (Lowland copperhead snake).